The following is a 224-amino-acid chain: Orotate phosphoribosyltransferase (224 aa).

Lys-29 lines the 5-phospho-alpha-D-ribose 1-diphosphate pocket. Orotate is bound at residue 37-38 (FF). 5-phospho-alpha-D-ribose 1-diphosphate-binding positions include 75–76 (YK), Arg-105, Lys-106, Lys-109, His-111, and 130–138 (DDVITAGTS). Residues Thr-134 and Arg-162 each contribute to the orotate site.

Belongs to the purine/pyrimidine phosphoribosyltransferase family. PyrE subfamily. As to quaternary structure, homodimer. Mg(2+) is required as a cofactor.

The enzyme catalyses orotidine 5'-phosphate + diphosphate = orotate + 5-phospho-alpha-D-ribose 1-diphosphate. It participates in pyrimidine metabolism; UMP biosynthesis via de novo pathway; UMP from orotate: step 1/2. In terms of biological role, catalyzes the transfer of a ribosyl phosphate group from 5-phosphoribose 1-diphosphate to orotate, leading to the formation of orotidine monophosphate (OMP). The sequence is that of Orotate phosphoribosyltransferase from Bordetella parapertussis (strain 12822 / ATCC BAA-587 / NCTC 13253).